Reading from the N-terminus, the 252-residue chain is Pantothenate synthetase (252 aa).

29–36 (MGNLHAGH) contacts ATP. Histidine 36 (proton donor) is an active-site residue. (R)-pantoate is bound at residue glutamine 60. Glutamine 60 contributes to the beta-alanine binding site. 146 to 149 (GEKD) is a binding site for ATP. Glutamine 152 contacts (R)-pantoate. ATP is bound by residues valine 175 and 183-186 (CSSR).

This sequence belongs to the pantothenate synthetase family. As to quaternary structure, homodimer.

It localises to the cytoplasm. It carries out the reaction (R)-pantoate + beta-alanine + ATP = (R)-pantothenate + AMP + diphosphate + H(+). The protein operates within cofactor biosynthesis; (R)-pantothenate biosynthesis; (R)-pantothenate from (R)-pantoate and beta-alanine: step 1/1. Its function is as follows. Catalyzes the condensation of pantoate with beta-alanine in an ATP-dependent reaction via a pantoyl-adenylate intermediate. The chain is Pantothenate synthetase from Legionella pneumophila subsp. pneumophila (strain Philadelphia 1 / ATCC 33152 / DSM 7513).